A 237-amino-acid polypeptide reads, in one-letter code: DPDMIFEIKDAVSIPVMAKARIGHFVEAQVLESIGVDMIDESEVLTPADEINHINKKAFTAPFVCGARNLGEALRRIDEGAAMIRTKGEAGTGNVVEAVKHMRAVNEGIARVVGYHEMGLEAELVQMARNELKVPMEIILEVAKLKRLPVVNFAAGGIATPADAALMMQMGCDGVFVGSGIFKSGNPEIRAKAIVEATYNFDKPELIGEVSKNLGEAMVGINIDQIPEEMLLAKRGI.

Lysine 19 (schiff-base intermediate with D-ribose 5-phosphate) is an active-site residue. D-ribose 5-phosphate is bound at residue glycine 91. D-glyceraldehyde 3-phosphate is bound at residue arginine 103. Residues glycine 157 and 178-179 (GS) contribute to the D-ribose 5-phosphate site.

This sequence belongs to the PdxS/SNZ family. As to quaternary structure, in the presence of PdxT, forms a dodecamer of heterodimers.

The enzyme catalyses aldehydo-D-ribose 5-phosphate + D-glyceraldehyde 3-phosphate + L-glutamine = pyridoxal 5'-phosphate + L-glutamate + phosphate + 3 H2O + H(+). It functions in the pathway cofactor biosynthesis; pyridoxal 5'-phosphate biosynthesis. Its function is as follows. Catalyzes the formation of pyridoxal 5'-phosphate from ribose 5-phosphate (RBP), glyceraldehyde 3-phosphate (G3P) and ammonia. The ammonia is provided by the PdxT subunit. Can also use ribulose 5-phosphate and dihydroxyacetone phosphate as substrates, resulting from enzyme-catalyzed isomerization of RBP and G3P, respectively. The sequence is that of Pyridoxal 5'-phosphate synthase subunit PdxS from Methanococcus vannielii.